A 188-amino-acid chain; its full sequence is Peroxiredoxin y4vD (188 aa).

The region spanning P2–F152 is the Thioredoxin domain. The active-site Cysteine sulfenic acid (-SOH) intermediate (for peroxiredoxin activity) is the C56.

It belongs to the peroxiredoxin family. Prx5 subfamily. As to quaternary structure, monomer.

The catalysed reaction is a hydroperoxide + 2 glutathione = an alcohol + glutathione disulfide + H2O. Functionally, thiol-specific peroxidase that catalyzes the reduction of hydrogen peroxide and organic hydroperoxides to water and alcohols, respectively. Plays a role in cell protection against oxidative stress by detoxifying peroxides. In Sinorhizobium fredii (strain NBRC 101917 / NGR234), this protein is Peroxiredoxin y4vD.